The primary structure comprises 287 residues: ATP synthase gamma chain (287 aa).

It belongs to the ATPase gamma chain family. In terms of assembly, F-type ATPases have 2 components, CF(1) - the catalytic core - and CF(0) - the membrane proton channel. CF(1) has five subunits: alpha(3), beta(3), gamma(1), delta(1), epsilon(1). CF(0) has three main subunits: a, b and c.

The protein resides in the cell inner membrane. Functionally, produces ATP from ADP in the presence of a proton gradient across the membrane. The gamma chain is believed to be important in regulating ATPase activity and the flow of protons through the CF(0) complex. The chain is ATP synthase gamma chain from Colwellia maris.